The sequence spans 273 residues: Type II methyltransferase M2.MboI (273 aa).

It belongs to the N(4)/N(6)-methyltransferase family.

The catalysed reaction is a 2'-deoxyadenosine in DNA + S-adenosyl-L-methionine = an N(6)-methyl-2'-deoxyadenosine in DNA + S-adenosyl-L-homocysteine + H(+). Its function is as follows. A beta subtype methylase that recognizes the double-stranded sequence 5'-GATC-3', methylates A-2 on both strands, and protects the DNA from cleavage by the MboI endonuclease. This seems to be a weaker methylase than M1.MboI. The protein is Type II methyltransferase M2.MboI (mboIBM) of Moraxella bovis.